A 688-amino-acid polypeptide reads, in one-letter code: Sciellin (688 aa).

Polar residues predominate over residues 1–25; sequence MSNVTLRKMSPTGNEMKSTTQGTTR. The interval 1–29 is disordered; sequence MSNVTLRKMSPTGNEMKSTTQGTTRKQQD. At Lys83 the chain carries N6-acetyllysine. Residues 134–231 form a disordered region; sequence QPGGSLNANT…TNRSAERNIR (98 aa). Over residues 140–154 the composition is skewed to low complexity; that stretch reads NANTSNTIASTSATT. Over residues 186 to 195 the composition is skewed to pro residues; it reads VHPPIPPKPS. A run of 16 repeats spans residues 251–266, 267–286, 287–306, 307–326, 327–346, 347–366, 367–386, 387–406, 407–426, 427–446, 447–465, 466–484, 485–504, 505–523, 524–543, and 544–563. Positions 251–563 are 16 X approximate tandem repeats; the sequence is GEELDNLIKM…NSHVSENKNG (313 aa). Ser289 bears the Phosphoserine mark. Residues 340–373 are disordered; the sequence is MNKTSRRSEDLDNATEVNPKGHENTTGKKDLDGL. Over residues 358–373 the composition is skewed to basic and acidic residues; it reads PKGHENTTGKKDLDGL. Residue Ser389 is modified to Phosphoserine. The LIM zinc-binding domain occupies 619-685; that stretch reads DMCTYCRKPL…EPCYSKIMAK (67 aa).

In terms of tissue distribution, highly expressed in esophagus. It is also expressed in keratinocytes, amniotic tissue, foreskin stratum spinosum and stratum granulosum, hair follicle and nail.

It localises to the cytoplasm. The protein localises to the membrane. Its function is as follows. May function in the assembly or regulation of proteins in the cornified envelope. The LIM domain may be involved in homotypic or heterotypic associations and may function to localize sciellin to the cornified envelope. In Homo sapiens (Human), this protein is Sciellin (SCEL).